The following is a 285-amino-acid chain: MFNWVKTAMLMAAITALFIVIGGMIGGSRGMTIALLFALGMNFFSYWFSDKMVLRMYNAQEVDENTAPQFYRMVRELATRANLPMPRVYLINEDAPNAFATGRNPEHAAVAATTGILRVLSEREMRGVMAHELAHVKHRDILISTITATMAGAISALANFAMFFGGRDENGRPANPIAGIAVALLAPIAGALIQMAISRAREFEADRGGAQISGDPQSLATALDKIHRYAAGIPFQAAEAHPATAQMMIMNPLHGGGLQNLFSTHPATEERIARLMEMARTGRFE.

2 helical membrane passes run 7–27 (TAML…MIGG) and 30–50 (GMTI…WFSD). Residue H131 coordinates Zn(2+). E132 is an active-site residue. H135 lines the Zn(2+) pocket. A run of 2 helical transmembrane segments spans residues 146–166 (ITAT…FFGG) and 177–197 (IAGI…QMAI). Zn(2+) is bound at residue E202.

It belongs to the peptidase M48B family. It depends on Zn(2+) as a cofactor.

It is found in the cell inner membrane. This Burkholderia cenocepacia (strain HI2424) protein is Protease HtpX homolog.